A 383-amino-acid polypeptide reads, in one-letter code: S-adenosylmethionine synthase (383 aa).

Residue H15 coordinates ATP. D17 is a binding site for Mg(2+). Residue E43 participates in K(+) binding. E56 and Q99 together coordinate L-methionine. Residues 99 to 109 form a flexible loop region; that stretch reads QSPDINQGVDR. ATP-binding positions include 164–166, 230–231, D239, 245–246, A262, and K266; these read DAK, RF, and RK. Residue D239 coordinates L-methionine. K270 provides a ligand contact to L-methionine.

It belongs to the AdoMet synthase family. In terms of assembly, homotetramer; dimer of dimers. Requires Mg(2+) as cofactor. The cofactor is K(+).

It is found in the cytoplasm. The catalysed reaction is L-methionine + ATP + H2O = S-adenosyl-L-methionine + phosphate + diphosphate. It participates in amino-acid biosynthesis; S-adenosyl-L-methionine biosynthesis; S-adenosyl-L-methionine from L-methionine: step 1/1. Catalyzes the formation of S-adenosylmethionine (AdoMet) from methionine and ATP. The overall synthetic reaction is composed of two sequential steps, AdoMet formation and the subsequent tripolyphosphate hydrolysis which occurs prior to release of AdoMet from the enzyme. The sequence is that of S-adenosylmethionine synthase from Shewanella putrefaciens (strain CN-32 / ATCC BAA-453).